An 815-amino-acid chain; its full sequence is MSETLPRSDDLEATWNFIEPGINQILGNEKNQASTSKRVYKILSPTMYMEVYTAIYNYCVNKSRSSGHFSTDSRTGQSTILVGSEIYEKLKNYLKNYILNFKQSNSETFLQFYVKRWKRFTIGAIFLNHAFDYMNRYWVQKERSDGKRHIFDVNTLCLMTWKEVMFDPSKDVLINELLDQVTLGREGQIIQRSNISTAIKSLVALGIDPQDLKKLNLNVYIQVFEKPFLKKTQEYYTQYTNDYLEKHSVTEYIFEAHEIIKREEKAMTIYWDDHTKKPLSMALNKVLITDHIEKLENEFVVLLDARDIEKITSLYALIRRDFTLIPRMASVFENYVKKTGENEISSLLAMHKHNIMKNENANPKKLALMTAHSLSPKDYIKKLLEVHDIFSKIFNESFPDDIPLAKALDNACGAFININEFALPAGSPKSATSKTSEMLAKYSDILLKKATKPEVASDMSDEDIITIFKYLTDKDAFETHYRRLFAKRLIHGTSTSAEDEENIIQRLQAANSMEYTGKITKMFQDIRLSKILEDDFAVALKNEPDYSKAKYPDLQPFVLAENMWPFSYQEVEFKLPKELVPSHEKLKESYSQKHNGRILKWLWPLCRGELKADIGKPGRMPFNFTVTLFQMAILLLYNDADVLTLENIQEGTSLTIQHIAAAMVPFIKFKLIQQVPPGLDALVKPETQFKLSRPYKALKTNINFASGVKNDILQSLSGGGHDNHGNKLGNKRLTEDERIEKELNTERQIFLEACIVRIMKAKRNLPHTTLVNECIAQSHQRFNAKVSMVKRAIDSLIQKGYLQRGDDGESYAYLA.

Positions 9–280 (DDLEATWNFI…WDDHTKKPLS (272 aa)) are required for interaction with SKP1/CBF3D and F-box protein. Residues 448–748 (KKATKPEVAS…IEKELNTERQ (301 aa)) are required for interaction with CDC34/UBC3. Positions 746-807 (ERQIFLEACI…QKGYLQRGDD (62 aa)) constitute a Cullin neddylation domain. Lys760 participates in a covalent cross-link: Glycyl lysine isopeptide (Lys-Gly) (interchain with G-Cter in NEDD8).

This sequence belongs to the cullin family. Component of multiple SCF (SKP1-CUL1-F-box) E3 ubiquitin-protein ligase complexes formed of CUL1, SKP1/HRT1, RBX1 and a variable F-box domain-containing protein as substrate-specific adapter. Component of the SCF(CDC4) complex containing CDC4. Component of the SCF(MET30) complex containing MET30. Component of the SCF(GRR1) complex containing GRR1. Component of the probable SCF(DIA2) complex containing DIA2. Component of the probable SCF(YDR131C) complex containing YDR131C. Component of the probable SCF(YDR306C) complex containing YDR306C. Component of the probable SCF(YLR224W) complex containing YLR224W. Component of the probable SCF(YJL149W) complex containing YJL149W. Component of the probable SCF(YNL311C) complex containing YNL311C. Component of the probable SCF(MDM30) complex containing MDM30. Component of the probable SCF(UFO1) complex containing UFO1. Component of the probable SCF(HRT3) complex containing HRT3. Component of the probable SCF(YBR280C) complex containing YBR280C. Component of the probable SCF(YBR352W) complex containing YBR352W. Interacts with DCN1, YBR280C, YLR224W and YLR352W. The unneddylated form interacts with LAG2/CAND1 and the interaction mediates the exchange of the F-box substrate-specific subunit. In terms of processing, neddylated; enhancing the ubiquitin-ligase activity.

The protein localises to the cytoplasm. Its subcellular location is the nucleus. In terms of biological role, core component of multiple cullin-RING-based SCF (SKP1-CUL1-F-box) E3 ubiquitin-protein ligase complexes which mediate the ubiquitination and subsequent proteasomal degradation of target proteins. As a scaffold protein may contribute to catalysis through positioning of the substrate and the ubiquitin-conjugating enzyme. The SCF complex associates with CDC34 as the E2 ubiquitin-conjugating enzyme. The functional specificity of the SCF complex depends on the type of F-box protein. SCF(CDC4) controls the G1-to-S phase transition; it directs ubiquitination of the phosphorylated CDK inhibitor SIC1 and of CDC6. SCF(CDC4) directs ubiquitination of GCN4. SCF(GRR1) directs ubiquitination of phosphorylated CLN1, CLN2 and GIC2. SCF(MET30) directs ubiquitination of MET4. SCF(DIA2) is specifically involved in the pheromone induced degradation of phosphorylated TEC1. SCF(MDM30) seems to direct ubiquitination of FZ01. Involved in the regulation of methionine biosynthesis genes. This chain is Cell division control protein 53 (CDC53), found in Saccharomyces cerevisiae (strain ATCC 204508 / S288c) (Baker's yeast).